The following is a 794-amino-acid chain: Lon protease (794 aa).

The region spanning 29 to 222 is the Lon N-terminal domain; it reads VPLLPLRGVL…TLISIIQDEQ (194 aa). 374-381 is an ATP binding site; that stretch reads GPPGVGKT. In terms of domain architecture, Lon proteolytic spans 610 to 791; it reads TDQVGMATGL…DEVLEHALVG (182 aa). Active-site residues include S697 and K740.

Belongs to the peptidase S16 family. As to quaternary structure, homohexamer. Organized in a ring with a central cavity.

The protein localises to the cytoplasm. It catalyses the reaction Hydrolysis of proteins in presence of ATP.. ATP-dependent serine protease that mediates the selective degradation of mutant and abnormal proteins as well as certain short-lived regulatory proteins. Required for cellular homeostasis and for survival from DNA damage and developmental changes induced by stress. Degrades polypeptides processively to yield small peptide fragments that are 5 to 10 amino acids long. Binds to DNA in a double-stranded, site-specific manner. This is Lon protease from Bacillus thuringiensis (strain Al Hakam).